We begin with the raw amino-acid sequence, 564 residues long: 4-coumarate--CoA ligase 1 (564 aa).

ATP-binding residues include Ser209, Ser210, Gly211, Thr212, Thr213, and Lys217. The (E)-4-coumaroyl-AMP site is built by Tyr259 and Thr263. Arg280 contributes to the CoA binding site. An SBD1 region spans residues 282 to 351; sequence DLAAMMDLVE…AKLPGAVLGQ (70 aa). Residues Ala329, Gln351, Gly352, Thr356, and Met364 each coordinate (E)-4-coumaroyl-AMP. ATP-binding residues include Gln351, Gly352, and Thr356. The segment at 352–419 is SBD2; that stretch reads GYGMTEAGPV…IRGQQIMKGY (68 aa). ATP is bound by residues Asp440 and Arg455. Positions 457 and 461 each coordinate (E)-4-coumaroyl-AMP. Arg463 and Gly464 together coordinate CoA. Lys547 serves as a coordination point for ATP.

It belongs to the ATP-dependent AMP-binding enzyme family. It depends on Mg(2+) as a cofactor. As to expression, expressed in roots, stems, leaf blades and leaf sheaths.

The catalysed reaction is (E)-ferulate + ATP + CoA = (E)-feruloyl-CoA + AMP + diphosphate. It catalyses the reaction (E)-4-coumarate + ATP + CoA = (E)-4-coumaroyl-CoA + AMP + diphosphate. The enzyme catalyses (E)-cinnamate + ATP + CoA = (E)-cinnamoyl-CoA + AMP + diphosphate. It carries out the reaction (E)-caffeate + ATP + CoA = (E)-caffeoyl-CoA + AMP + diphosphate. The catalysed reaction is (E)-ferulate + ATP + H(+) = (E)-feruloyl-AMP + diphosphate. It catalyses the reaction (E)-feruloyl-AMP + CoA = (E)-feruloyl-CoA + AMP + H(+). The enzyme catalyses (E)-4-coumarate + ATP + H(+) = (E)-4-coumaroyl-AMP + diphosphate. It carries out the reaction (E)-4-coumaroyl-AMP + CoA = (E)-4-coumaroyl-CoA + AMP + H(+). The catalysed reaction is (E)-caffeate + ATP + H(+) = (E)-caffeoyl-AMP + diphosphate. It catalyses the reaction (E)-caffeoyl-AMP + CoA = (E)-caffeoyl-CoA + AMP + H(+). It participates in phytoalexin biosynthesis; 3,4',5-trihydroxystilbene biosynthesis; 3,4',5-trihydroxystilbene from trans-4-coumarate: step 1/2. Functionally, involved in the phenylpropanoid metabolism by mediating the activation of a number of hydroxycinnamates for the biosynthesis of monolignols and other phenolic secondary metabolites. Catalyzes the formation of CoA esters of cinnamate, 4-coumarate, caffeate and ferulate. Is more efficient with substrates in the following order: ferulate &gt; 4-coumarate &gt; cinnamate &gt; caffeate. Cannot convert sinapate to its corresponding CoA ester. Follows a two-step reaction mechanism, wherein the carboxylate substrate first undergoes adenylation by ATP, followed by a thioesterification in the presence of CoA to yield the final CoA thioester. This is 4-coumarate--CoA ligase 1 from Oryza sativa subsp. japonica (Rice).